Here is a 117-residue protein sequence, read N- to C-terminus: Large ribosomal subunit protein bL19 (117 aa).

Belongs to the bacterial ribosomal protein bL19 family.

In terms of biological role, this protein is located at the 30S-50S ribosomal subunit interface and may play a role in the structure and function of the aminoacyl-tRNA binding site. The polypeptide is Large ribosomal subunit protein bL19 (Kineococcus radiotolerans (strain ATCC BAA-149 / DSM 14245 / SRS30216)).